Here is a 106-residue protein sequence, read N- to C-terminus: MADFLGMMKQAAQLQSKMKAMQDELDHVEVEGASGGGLVSVRMTAKMEVKAISIDPSLMKPDEREILEDLVVSALGDARRKAEVAMQEKMQALTGGLGLPPGLGLG.

The protein belongs to the YbaB/EbfC family. In terms of assembly, homodimer.

The protein resides in the cytoplasm. Its subcellular location is the nucleoid. In terms of biological role, binds to DNA and alters its conformation. May be involved in regulation of gene expression, nucleoid organization and DNA protection. This is Nucleoid-associated protein Nham_0463 from Nitrobacter hamburgensis (strain DSM 10229 / NCIMB 13809 / X14).